The sequence spans 559 residues: Dihydroxy-acid dehydratase (559 aa).

Cys-56 lines the [2Fe-2S] cluster pocket. Asp-88 lines the Mg(2+) pocket. Cys-129 lines the [2Fe-2S] cluster pocket. 2 residues coordinate Mg(2+): Asp-130 and Lys-131. Lys-131 bears the N6-carboxylysine mark. Cys-198 lines the [2Fe-2S] cluster pocket. Position 449 (Glu-449) interacts with Mg(2+). The active-site Proton acceptor is Ser-475.

This sequence belongs to the IlvD/Edd family. In terms of assembly, homodimer. [2Fe-2S] cluster serves as cofactor. Requires Mg(2+) as cofactor.

It catalyses the reaction (2R)-2,3-dihydroxy-3-methylbutanoate = 3-methyl-2-oxobutanoate + H2O. It carries out the reaction (2R,3R)-2,3-dihydroxy-3-methylpentanoate = (S)-3-methyl-2-oxopentanoate + H2O. It participates in amino-acid biosynthesis; L-isoleucine biosynthesis; L-isoleucine from 2-oxobutanoate: step 3/4. Its pathway is amino-acid biosynthesis; L-valine biosynthesis; L-valine from pyruvate: step 3/4. Functionally, functions in the biosynthesis of branched-chain amino acids. Catalyzes the dehydration of (2R,3R)-2,3-dihydroxy-3-methylpentanoate (2,3-dihydroxy-3-methylvalerate) into 2-oxo-3-methylpentanoate (2-oxo-3-methylvalerate) and of (2R)-2,3-dihydroxy-3-methylbutanoate (2,3-dihydroxyisovalerate) into 2-oxo-3-methylbutanoate (2-oxoisovalerate), the penultimate precursor to L-isoleucine and L-valine, respectively. The protein is Dihydroxy-acid dehydratase of Ruthia magnifica subsp. Calyptogena magnifica.